The sequence spans 480 residues: ATP synthase subunit beta (480 aa).

Residue 158 to 165 (GGAGVGKT) coordinates ATP.

This sequence belongs to the ATPase alpha/beta chains family. As to quaternary structure, F-type ATPases have 2 components, CF(1) - the catalytic core - and CF(0) - the membrane proton channel. CF(1) has five subunits: alpha(3), beta(3), gamma(1), delta(1), epsilon(1). CF(0) has three main subunits: a(1), b(2) and c(9-12). The alpha and beta chains form an alternating ring which encloses part of the gamma chain. CF(1) is attached to CF(0) by a central stalk formed by the gamma and epsilon chains, while a peripheral stalk is formed by the delta and b chains.

The protein localises to the cell inner membrane. It carries out the reaction ATP + H2O + 4 H(+)(in) = ADP + phosphate + 5 H(+)(out). Produces ATP from ADP in the presence of a proton gradient across the membrane. The catalytic sites are hosted primarily by the beta subunits. This chain is ATP synthase subunit beta, found in Koribacter versatilis (strain Ellin345).